A 37-amino-acid polypeptide reads, in one-letter code: Cytochrome b6-f complex subunit 5 (37 aa).

Residues 5–25 (LLSGIVLGLIVVTLAGLFYAA) form a helical membrane-spanning segment.

It belongs to the PetG family. As to quaternary structure, the 4 large subunits of the cytochrome b6-f complex are cytochrome b6, subunit IV (17 kDa polypeptide, PetD), cytochrome f and the Rieske protein, while the 4 small subunits are PetG, PetL, PetM and PetN. The complex functions as a dimer.

It localises to the cellular thylakoid membrane. In terms of biological role, component of the cytochrome b6-f complex, which mediates electron transfer between photosystem II (PSII) and photosystem I (PSI), cyclic electron flow around PSI, and state transitions. PetG is required for either the stability or assembly of the cytochrome b6-f complex. This chain is Cytochrome b6-f complex subunit 5, found in Anabaena variabilis.